We begin with the raw amino-acid sequence, 118 residues long: Small ribosomal subunit protein uS13 (118 aa).

Residues 94 to 118 (SLPLRGQRTKTNARTRKGPRKPIKK) are disordered.

It belongs to the universal ribosomal protein uS13 family. As to quaternary structure, part of the 30S ribosomal subunit. Forms a loose heterodimer with protein S19. Forms two bridges to the 50S subunit in the 70S ribosome.

Its function is as follows. Located at the top of the head of the 30S subunit, it contacts several helices of the 16S rRNA. In the 70S ribosome it contacts the 23S rRNA (bridge B1a) and protein L5 of the 50S subunit (bridge B1b), connecting the 2 subunits; these bridges are implicated in subunit movement. Contacts the tRNAs in the A and P-sites. The sequence is that of Small ribosomal subunit protein uS13 from Vibrio parahaemolyticus serotype O3:K6 (strain RIMD 2210633).